Here is a 294-residue protein sequence, read N- to C-terminus: Polyketide transferase grgF (294 aa).

Residues Cys115, Asp240, and His269 contribute to the active site.

Belongs to the polyketide transferase af380 family. As to quaternary structure, homodimer.

It functions in the pathway secondary metabolite biosynthesis. Polyketide transferase; part of the gene cluster that mediates the biosynthesis of gregatin A, a fungal polyketide featuring an alkylated furanone core. The PKS grgA synthesizes C11 and C4 polyketide chains in the presence and absence of the trans-enoyl reductase grgB, respectively. The polyketide transferase grgF is then responsible for the fusion of the two carbon chains to produce the furanone skeleton of gregatin A. GrgF first undergoes a conformational change to an open form, and the active site Cys-115 is acylated by the C11 chain. After the elimination of the phosphopantetheinyl chain, the second polyketide chain of four carbons long is delivered adjacent to the enzyme-bound C11 chain. The catalytic histidine, His-269, deprotonates a proton from C-2 of the long chain, and the resultant carbanion attacks the C-1 carbonyl of the crotonyl group to perform Claisen condensation, by which the phosphopantetheinyl chain is released. Eventually, hydrolysis of the thioester linkage probably by a His-269-activated water molecule completes the reaction to afford the grgF final product. Next, the cytochrome P450 monooxygenase grgG accepts the unstable grgF final product as substrate and performs the oxidative cyclization to furnish the gregatin scaffold and leads to the formation of desmethylgregatin A. Finally, the O-methyltransferase grgD methylates the carboxyl group of desmethylgregatin A to provide gregatin A. This chain is Polyketide transferase grgF, found in Penicillium sp.